Consider the following 165-residue polypeptide: 3-isopropylmalate dehydratase small subunit (165 aa).

The protein belongs to the LeuD family. LeuD type 2 subfamily. As to quaternary structure, heterodimer of LeuC and LeuD.

The enzyme catalyses (2R,3S)-3-isopropylmalate = (2S)-2-isopropylmalate. Its pathway is amino-acid biosynthesis; L-leucine biosynthesis; L-leucine from 3-methyl-2-oxobutanoate: step 2/4. Its function is as follows. Catalyzes the isomerization between 2-isopropylmalate and 3-isopropylmalate, via the formation of 2-isopropylmaleate. The sequence is that of 3-isopropylmalate dehydratase small subunit from Saccharolobus islandicus (strain M.14.25 / Kamchatka #1) (Sulfolobus islandicus).